The following is a 293-amino-acid chain: NAD kinase (293 aa).

The Proton acceptor role is filled by D73. Residues 73–74, H78, 147–148, R158, R175, D177, 188–193, and Q248 contribute to the NAD(+) site; these read DG, ND, and TAYALS.

This sequence belongs to the NAD kinase family. It depends on a divalent metal cation as a cofactor.

It is found in the cytoplasm. It carries out the reaction NAD(+) + ATP = ADP + NADP(+) + H(+). Functionally, involved in the regulation of the intracellular balance of NAD and NADP, and is a key enzyme in the biosynthesis of NADP. Catalyzes specifically the phosphorylation on 2'-hydroxyl of the adenosine moiety of NAD to yield NADP. This Nitrosococcus oceani (strain ATCC 19707 / BCRC 17464 / JCM 30415 / NCIMB 11848 / C-107) protein is NAD kinase.